Here is a 427-residue protein sequence, read N- to C-terminus: Probable anaerobic glycerol-3-phosphate dehydrogenase subunit B (427 aa).

The protein belongs to the anaerobic G-3-P dehydrogenase subunit B family. FMN is required as a cofactor.

It catalyses the reaction a quinone + sn-glycerol 3-phosphate = dihydroxyacetone phosphate + a quinol. Its pathway is polyol metabolism; glycerol degradation via glycerol kinase pathway; glycerone phosphate from sn-glycerol 3-phosphate (anaerobic route): step 1/1. The protein is Probable anaerobic glycerol-3-phosphate dehydrogenase subunit B of Halobacterium salinarum (strain ATCC 29341 / DSM 671 / R1).